Consider the following 278-residue polypeptide: Cytoplasmic envelopment protein 1 (278 aa).

This sequence belongs to the herpesviridae cytoplasmic envelopment protein 1 family.

Its subcellular location is the virion. The protein localises to the virion tegument. The protein resides in the host cytoplasm. It is found in the host Golgi apparatus. Functionally, plays a critical role in cytoplasmic virus egress. Participates in the final step of tegumentation and envelope acquisition within the host cytoplasm. The polypeptide is Cytoplasmic envelopment protein 1 (ORF42) (Homo sapiens (Human)).